Consider the following 441-residue polypeptide: Glutamate--tRNA ligase 2 (441 aa).

The short motif at 9 to 19 (PSPTGYIHVGN) is the 'HIGH' region element. A 'KMSKS' region motif is present at residues 239 to 243 (ALSKR). Lys242 lines the ATP pocket.

Belongs to the class-I aminoacyl-tRNA synthetase family. Glutamate--tRNA ligase type 1 subfamily. In terms of assembly, monomer.

The protein localises to the cytoplasm. It catalyses the reaction tRNA(Glu) + L-glutamate + ATP = L-glutamyl-tRNA(Glu) + AMP + diphosphate. In terms of biological role, catalyzes the attachment of glutamate to tRNA(Glu) in a two-step reaction: glutamate is first activated by ATP to form Glu-AMP and then transferred to the acceptor end of tRNA(Glu). This is Glutamate--tRNA ligase 2 from Cereibacter sphaeroides (strain ATCC 17023 / DSM 158 / JCM 6121 / CCUG 31486 / LMG 2827 / NBRC 12203 / NCIMB 8253 / ATH 2.4.1.) (Rhodobacter sphaeroides).